A 354-amino-acid polypeptide reads, in one-letter code: NADH-quinone oxidoreductase subunit H (354 aa).

The next 10 membrane-spanning stretches (helical) occupy residues 12-32, 62-82, 89-109, 124-144, 162-182, 203-223, 239-259, 263-283, 291-311, and 326-346; these read LLGGFWPVVWNLIKIVALIAP, PWGLLTPIADAVKLIFKEIIL, GLFLLGPVMTIMPALAAWVVV, LLFLMAITSMEVYGVIIAGWA, VSYEIAMGFALVVVLMVSGTL, FLSWNWLPLFPIFIVYFISGL, EIVAGHMIEYSGMAFAMFFLA, NMILISALAVTMFLGGWLPPI, IPGWIWLGLKTFVVVTMFLWV, and LGWKIFIPITLIWLVVVGLWI.

The protein belongs to the complex I subunit 1 family. NDH-1 is composed of 14 different subunits. Subunits NuoA, H, J, K, L, M, N constitute the membrane sector of the complex.

The protein localises to the cell inner membrane. The enzyme catalyses a quinone + NADH + 5 H(+)(in) = a quinol + NAD(+) + 4 H(+)(out). Its function is as follows. NDH-1 shuttles electrons from NADH, via FMN and iron-sulfur (Fe-S) centers, to quinones in the respiratory chain. The immediate electron acceptor for the enzyme in this species is believed to be ubiquinone. Couples the redox reaction to proton translocation (for every two electrons transferred, four hydrogen ions are translocated across the cytoplasmic membrane), and thus conserves the redox energy in a proton gradient. This subunit may bind ubiquinone. This chain is NADH-quinone oxidoreductase subunit H, found in Methylibium petroleiphilum (strain ATCC BAA-1232 / LMG 22953 / PM1).